The primary structure comprises 151 residues: UPF0178 protein Swoo_1444 (151 aa).

Belongs to the UPF0178 family.

This is UPF0178 protein Swoo_1444 from Shewanella woodyi (strain ATCC 51908 / MS32).